A 465-amino-acid chain; its full sequence is MLSENEIKILSYLKLKKKANAEEISKELGLPLSSIFSLAKLLEEKGYVKIGERKIIRFELTEEGKKRLKEGFPEEILLKELNGQPSLIEDLKNKMGKDLEIAISWARKKNLVKIDQNRVIPNTSNYTFSTEKEALLKPESADEKVLQELLSRKLITRKEESKLEITLLKEEFEEQNYITQLTSELLRSKDWKKYKIREYNVEALPPYFPLAKKHFFRDFIEKLKDVMKELGFTEVNAGYIEMELYNFDLLFQAQDHPAREIHDSFRVDGLGKIDDERLLKEIKEMHEKGWKYSWDPQIAKRLVLRSQTTAVTARILSSRPSVPFKGFSLGKVFRPDSIDATHLIEFHQLDGVIIQKEFSFTDLLGILREIFYKIGIKEIKFKPGYFPFTEPSVEVYGKIEGLGWVEMSGAGLLRPEILKAMDIDANAGAWGIGIDRLAMLLFGLKDIRLLYANDIDFLRKMKVRL.

L-phenylalanine contacts are provided by residues T309, 348–350 (QLD), and F388. Residue E390 coordinates Mg(2+).

The protein belongs to the class-II aminoacyl-tRNA synthetase family. Phe-tRNA synthetase alpha subunit type 2 subfamily. Tetramer of two alpha and two beta subunits. Requires Mg(2+) as cofactor.

Its subcellular location is the cytoplasm. The enzyme catalyses tRNA(Phe) + L-phenylalanine + ATP = L-phenylalanyl-tRNA(Phe) + AMP + diphosphate + H(+). The polypeptide is Phenylalanine--tRNA ligase alpha subunit (Sulfolobus acidocaldarius (strain ATCC 33909 / DSM 639 / JCM 8929 / NBRC 15157 / NCIMB 11770)).